The following is a 652-amino-acid chain: Phosphomethylpyrimidine synthase (652 aa).

Substrate is bound by residues Asn235, Met264, Tyr293, His329, Ser349–Gly351, Asp390–Arg393, and Glu429. His433 is a binding site for Zn(2+). Tyr456 is a binding site for substrate. His497 serves as a coordination point for Zn(2+). The [4Fe-4S] cluster site is built by Cys577, Cys580, and Cys585.

Belongs to the ThiC family. As to quaternary structure, homodimer. [4Fe-4S] cluster is required as a cofactor.

It catalyses the reaction 5-amino-1-(5-phospho-beta-D-ribosyl)imidazole + S-adenosyl-L-methionine = 4-amino-2-methyl-5-(phosphooxymethyl)pyrimidine + CO + 5'-deoxyadenosine + formate + L-methionine + 3 H(+). It participates in cofactor biosynthesis; thiamine diphosphate biosynthesis. Catalyzes the synthesis of the hydroxymethylpyrimidine phosphate (HMP-P) moiety of thiamine from aminoimidazole ribotide (AIR) in a radical S-adenosyl-L-methionine (SAM)-dependent reaction. In Shewanella sediminis (strain HAW-EB3), this protein is Phosphomethylpyrimidine synthase.